We begin with the raw amino-acid sequence, 192 residues long: MKELFLIIGAPGSGKTTDASLIAQADATNITHYSTGDLLRAQVASGSELGKTIDSFISKGNLVPLDVVVNTIVCALKAAPTKTIIIDGYPRSVEQMMEFDKVLSEQNEICLKGVIEVRVSEEVAKKRVLGRNRGADDNEEVFYNRMKVYTEPLNEILDFYQKKKLHFIIDGERTIEPIVADMKELIKKIQSI.

12–17 is an ATP binding site; it reads GSGKTT. Residues 34–63 are NMP; that stretch reads STGDLLRAQVASGSELGKTIDSFISKGNLV. Residues T35, R40, 61 to 63, 88 to 91, and Q95 each bind AMP; these read NLV and GYPR. Residues 130-136 form an LID region; it reads GRNRGAD. Residue R131 participates in ATP binding. Residues R133 and R145 each coordinate AMP. R173 contacts ATP.

It belongs to the adenylate kinase family. As to quaternary structure, monomer.

It is found in the cytoplasm. The enzyme catalyses AMP + ATP = 2 ADP. Its pathway is purine metabolism; AMP biosynthesis via salvage pathway; AMP from ADP: step 1/1. In terms of biological role, catalyzes the reversible transfer of the terminal phosphate group between ATP and AMP. Plays an important role in cellular energy homeostasis and in adenine nucleotide metabolism. This is Adenylate kinase from Campylobacter jejuni subsp. doylei (strain ATCC BAA-1458 / RM4099 / 269.97).